We begin with the raw amino-acid sequence, 76 residues long: uncharacterized protein (76 aa).

Residues 53 to 70 (STKLHIIWFCIFAIFIAV) form a helical membrane-spanning segment.

It is found in the membrane. This is an uncharacterized protein from Haemophilus influenzae (strain ATCC 51907 / DSM 11121 / KW20 / Rd).